Reading from the N-terminus, the 82-residue chain is MVFLLCFFLVADVSYGINKDCLLPMDVGRCRARFPRYYYNSSSRRCEKFNYGGCGGNANNFHTLEECEKVCGVRSRDSPKEN.

Residues 1–16 (MVFLLCFFLVADVSYG) form the signal peptide. A BPTI/Kunitz inhibitor domain is found at 21–71 (CLLPMDVGRCRARFPRYYYNSSSRRCEKFNYGGCGGNANNFHTLEECEKVC). Intrachain disulfides connect Cys21-Cys71, Cys30-Cys54, and Cys46-Cys67. Positions 76-82 (RDSPKEN) are excised as a propeptide.

Belongs to the venom Kunitz-type family. Sea anemone type 2 potassium channel toxin subfamily.

Its subcellular location is the secreted. It is found in the nematocyst. In terms of biological role, dual-function toxin that inhibits both the serine protease trypsin and voltage-gated potassium channels Kv1.2/KCNA2. The sequence is that of U-actitoxin-Avd3l from Anemonia viridis (Snakelocks anemone).